The primary structure comprises 401 residues: Deubiquitinase and deneddylase Dub1 (401 aa).

Residues 1–11 (MLSPTNSTSKT) show a composition bias toward polar residues. The disordered stretch occupies residues 1-24 (MLSPTNSTSKTAPVPPRDSSKPVL). The chain crosses the membrane as a helical span at residues 40 to 60 (TALAVLLVVVTLGLILLFYSF). The disordered stretch occupies residues 77–130 (KEQPTISIPVPLPSPPLAVPRPSTPPPPVISRPSTPSAPKPSTPPPLLPKAPKP). Residues 86-128 (VPLPSPPLAVPRPSTPPPPVISRPSTPSAPKPSTPPPLLPKAP) show a composition bias toward pro residues. Residues histidine 275, aspartate 292, and cysteine 345 contribute to the active site.

The protein belongs to the peptidase C48 family. Binds to host NFKBIA.

The protein localises to the secreted. Its subcellular location is the host cell. It localises to the membrane. Its function is as follows. Effector proteins function to alter host cell physiology and promote bacterial survival in host tissues. This protease possesses deubiquitinating and deneddylating activities. Impairs ubiquitination and degradation of NF-kappa-B inhibitor alpha (NFKBIA), thereby preventing NF-kappa-B activation. The sequence is that of Deubiquitinase and deneddylase Dub1 (cdu1) from Chlamydia trachomatis serovar L2 (strain ATCC VR-902B / DSM 19102 / 434/Bu).